The primary structure comprises 238 residues: MNSNASNTPIAIGISQIFPCSYLDGQQEQLLVIQEETLDPILFDRLLAIGFRRSGSAIYKPRCPRCSACQPIRLPIKEFTPSKRQKRTLAHNRDLTWRITSEHTEAQYALYEKYIRERHFDGPMFPPSKSQYEQFLFCHWLPATFIEVYDGNRLLAVAVTDTLPNSLSAIYSYFDPDEERRSLGSLLILLQCRLAKLQDKEFLYLGYQIDANRKMSYKRLYRPYQILTPQGWEYSQVC.

It belongs to the R-transferase family. Bpt subfamily.

The protein localises to the cytoplasm. The catalysed reaction is N-terminal L-glutamyl-[protein] + L-leucyl-tRNA(Leu) = N-terminal L-leucyl-L-glutamyl-[protein] + tRNA(Leu) + H(+). It catalyses the reaction N-terminal L-aspartyl-[protein] + L-leucyl-tRNA(Leu) = N-terminal L-leucyl-L-aspartyl-[protein] + tRNA(Leu) + H(+). In terms of biological role, functions in the N-end rule pathway of protein degradation where it conjugates Leu from its aminoacyl-tRNA to the N-termini of proteins containing an N-terminal aspartate or glutamate. This Shewanella sp. (strain MR-4) protein is Aspartate/glutamate leucyltransferase.